Reading from the N-terminus, the 270-residue chain is Putative hydro-lyase Noca_0093 (270 aa).

Belongs to the D-glutamate cyclase family.

The sequence is that of Putative hydro-lyase Noca_0093 from Nocardioides sp. (strain ATCC BAA-499 / JS614).